We begin with the raw amino-acid sequence, 98 residues long: Large ribosomal subunit protein uL23 (98 aa).

This sequence belongs to the universal ribosomal protein uL23 family. Part of the 50S ribosomal subunit. Contacts protein L29, and trigger factor when it is bound to the ribosome.

In terms of biological role, one of the early assembly proteins it binds 23S rRNA. One of the proteins that surrounds the polypeptide exit tunnel on the outside of the ribosome. Forms the main docking site for trigger factor binding to the ribosome. This is Large ribosomal subunit protein uL23 from Rickettsia bellii (strain OSU 85-389).